Here is a 417-residue protein sequence, read N- to C-terminus: Serine hydroxymethyltransferase (417 aa).

(6S)-5,6,7,8-tetrahydrofolate is bound by residues leucine 121 and glycine 125 to leucine 127. Lysine 229 carries the N6-(pyridoxal phosphate)lysine modification. Residue serine 355–phenylalanine 357 coordinates (6S)-5,6,7,8-tetrahydrofolate.

Belongs to the SHMT family. Homodimer. Pyridoxal 5'-phosphate serves as cofactor.

It is found in the cytoplasm. The catalysed reaction is (6R)-5,10-methylene-5,6,7,8-tetrahydrofolate + glycine + H2O = (6S)-5,6,7,8-tetrahydrofolate + L-serine. It functions in the pathway one-carbon metabolism; tetrahydrofolate interconversion. Its pathway is amino-acid biosynthesis; glycine biosynthesis; glycine from L-serine: step 1/1. In terms of biological role, catalyzes the reversible interconversion of serine and glycine with tetrahydrofolate (THF) serving as the one-carbon carrier. This reaction serves as the major source of one-carbon groups required for the biosynthesis of purines, thymidylate, methionine, and other important biomolecules. Also exhibits THF-independent aldolase activity toward beta-hydroxyamino acids, producing glycine and aldehydes, via a retro-aldol mechanism. The polypeptide is Serine hydroxymethyltransferase (Xylella fastidiosa (strain M23)).